A 239-amino-acid polypeptide reads, in one-letter code: THAP domain-containing protein 3 (239 aa).

The THAP-type zinc-finger motif lies at Met-1–Phe-82. 2 disordered regions span residues Pro-88–Lys-125 and Val-139–Pro-174. Positions Asp-176 to Tyr-179 match the HCFC1-binding motif (HBM) motif.

As to quaternary structure, component of a THAP1/THAP3-HCFC1-OGT complex that contains at least, either THAP1 or THAP3, HCFC1 and OGT. Interacts directly with OGT and HCFC1 (via its HBM).

Component of a THAP1/THAP3-HCFC1-OGT complex that is required for the regulation of the transcriptional activity of RRM1. This Bos taurus (Bovine) protein is THAP domain-containing protein 3 (THAP3).